Here is a 182-residue protein sequence, read N- to C-terminus: Keratin, ultra high-sulfur matrix protein (182 aa).

It belongs to the KRTAP type 5 family. As to expression, cuticle layers of differentiating wool follicles.

The keratin products of mammalian epidermal derivatives such as wool and hair consist of microfibrils embedded in a rigid matrix of other proteins. The matrix proteins include the high-sulfur and high-tyrosine keratins, having molecular weights of 6-20 kDa, whereas the microfibrils contain the larger, low-sulfur keratins (40-56 kDa). The polypeptide is Keratin, ultra high-sulfur matrix protein (Ovis aries (Sheep)).